A 196-amino-acid chain; its full sequence is Carnitine operon protein CaiE (196 aa).

The interval 173 to 196 is disordered; it reads TQPLRQMEENRPRLQGTTDVTPKR. Over residues 187–196 the composition is skewed to polar residues; it reads QGTTDVTPKR.

This sequence belongs to the transferase hexapeptide repeat family.

The protein operates within amine and polyamine metabolism; carnitine metabolism. Overproduction of CaiE stimulates the activity of CaiB and CaiD. This Shigella flexneri serotype 5b (strain 8401) protein is Carnitine operon protein CaiE.